A 212-amino-acid chain; its full sequence is NAD(P)H-hydrate epimerase (212 aa).

The YjeF N-terminal domain maps to 11–212; sequence MRHYDFYTIN…ANDMGTYAVD (202 aa). (6S)-NADPHX is bound at residue 60 to 64; it reads NNGGD. Residues Asn-61 and Asp-123 each contribute to the K(+) site. (6S)-NADPHX-binding positions include 127–133, Tyr-138, and Asp-156; that span reads GIGIDRA. Residue Ser-159 coordinates K(+).

The protein belongs to the NnrE/AIBP family. The cofactor is K(+).

It carries out the reaction (6R)-NADHX = (6S)-NADHX. The enzyme catalyses (6R)-NADPHX = (6S)-NADPHX. Its function is as follows. Catalyzes the epimerization of the S- and R-forms of NAD(P)HX, a damaged form of NAD(P)H that is a result of enzymatic or heat-dependent hydration. This is a prerequisite for the S-specific NAD(P)H-hydrate dehydratase to allow the repair of both epimers of NAD(P)HX. The chain is NAD(P)H-hydrate epimerase from Limosilactobacillus reuteri (strain DSM 20016) (Lactobacillus reuteri).